Reading from the N-terminus, the 78-residue chain is Large ribosomal subunit protein bL31 (78 aa).

It belongs to the bacterial ribosomal protein bL31 family. Type A subfamily. Part of the 50S ribosomal subunit.

In terms of biological role, binds the 23S rRNA. This is Large ribosomal subunit protein bL31 (rpmE) from Rickettsia conorii (strain ATCC VR-613 / Malish 7).